Reading from the N-terminus, the 2443-residue chain is Spatacsin (2443 aa).

Ser1955 carries the post-translational modification Phosphoserine.

As to quaternary structure, interacts with AP5Z1, AP5B1, AP5S1 and ZFYVE26. Expressed in all structures of brain, with a high expression in cerebellum. Expressed in cortical projection neurons.

It localises to the cytoplasm. It is found in the cytosol. Its subcellular location is the nucleus. The protein localises to the cell projection. The protein resides in the axon. It localises to the dendrite. Its function is as follows. May play a role in neurite plasticity by maintaining cytoskeleton stability and regulating synaptic vesicle transport. In Homo sapiens (Human), this protein is Spatacsin (SPG11).